A 176-amino-acid polypeptide reads, in one-letter code: Nucleoside triphosphate/diphosphate phosphatase (176 aa).

Catalysis depends on Arg23, which acts as the Proton donor. The Mg(2+) site is built by Asn87, Asp103, Asp105, Asp107, Asp120, and Glu123.

Belongs to the Ntdp family. It depends on Mg(2+) as a cofactor.

It catalyses the reaction a ribonucleoside 5'-triphosphate + H2O = a ribonucleoside 5'-diphosphate + phosphate + H(+). It carries out the reaction a ribonucleoside 5'-diphosphate + H2O = a ribonucleoside 5'-phosphate + phosphate + H(+). Its function is as follows. Has nucleoside phosphatase activity towards nucleoside triphosphates and nucleoside diphosphates. This Bacillus mycoides (strain KBAB4) (Bacillus weihenstephanensis) protein is Nucleoside triphosphate/diphosphate phosphatase.